Consider the following 215-residue polypeptide: Cytokinin riboside 5'-monophosphate phosphoribohydrolase LOG3 (215 aa).

Substrate-binding positions include E84, 102–103 (RK), 119–125 (GYGTLEE), and T131.

Belongs to the LOG family. In terms of tissue distribution, expressed in roots and shoots. Detected in root procambium, lateral root primordia, vascular tissues of immature leaves, axillary buds, style and ovular funiculus.

Its subcellular location is the cytoplasm. It localises to the nucleus. It carries out the reaction N(6)-(dimethylallyl)adenosine 5'-phosphate + H2O = N(6)-dimethylallyladenine + D-ribose 5-phosphate. The catalysed reaction is 9-ribosyl-trans-zeatin 5'-phosphate + H2O = trans-zeatin + D-ribose 5-phosphate. Functionally, cytokinin-activating enzyme working in the direct activation pathway. Phosphoribohydrolase that converts inactive cytokinin nucleotides to the biologically active free-base forms. This is Cytokinin riboside 5'-monophosphate phosphoribohydrolase LOG3 (LOG3) from Arabidopsis thaliana (Mouse-ear cress).